A 736-amino-acid polypeptide reads, in one-letter code: Orphan sodium- and chloride-dependent neurotransmitter transporter NTT5 (736 aa).

The Cytoplasmic segment spans residues 1–138; the sequence is MKTEAQPSTS…FAYLWLNSGG (138 aa). The next 3 helical transmembrane spans lie at 139–159, 177–197, and 199–219; these read CSFA…LLFL, IIAP…FILG, and YFNV…QFPV. At 220–263 the chain is on the extracellular side; that stretch reads PWEKCPLTMNSSGFDPECERTTPSIYFWYQQALKASDRIEDGGS. Asn-229 carries an N-linked (GlcNAc...) asparagine glycan. Helical transmembrane passes span 264–284, 290–310, 338–358, and 383–403; these read PVYS…AFMI, TGKV…GFFI, VWSL…GSVA, and LTLL…ATVI. The Extracellular segment spans residues 404-495; it reads THRCCERNAE…EAMSFLPPSV (92 aa). The next 5 helical transmembrane spans lie at 496-516, 534-554, 568-588, 609-629, and 659-679; these read FWSF…AIGI, HTKL…LFFT, YWIV…VSWA, IFGW…FVTM, and ALLL…AYFV. The Cytoplasmic portion of the chain corresponds to 680–736; the sequence is YCRIHRIPFRPKSGDGPMTASTSLPLSHQLTPSKEVQKEEILQVDETKYPSTCNVTS.

The protein belongs to the sodium:neurotransmitter symporter (SNF) (TC 2.A.22) family. SLC6A16 subfamily. Highly expressed in peripheral tissues, particularly in testis, pancreas, and prostate.

Its subcellular location is the membrane. The polypeptide is Orphan sodium- and chloride-dependent neurotransmitter transporter NTT5 (SLC6A16) (Homo sapiens (Human)).